We begin with the raw amino-acid sequence, 126 residues long: DNA-directed RNA polymerase subunit omega (126 aa).

It belongs to the RNA polymerase subunit omega family. As to quaternary structure, the RNAP catalytic core consists of 2 alpha, 1 beta, 1 beta' and 1 omega subunit. When a sigma factor is associated with the core the holoenzyme is formed, which can initiate transcription.

The catalysed reaction is RNA(n) + a ribonucleoside 5'-triphosphate = RNA(n+1) + diphosphate. Functionally, promotes RNA polymerase assembly. Latches the N- and C-terminal regions of the beta' subunit thereby facilitating its interaction with the beta and alpha subunits. The protein is DNA-directed RNA polymerase subunit omega of Paramagnetospirillum magneticum (strain ATCC 700264 / AMB-1) (Magnetospirillum magneticum).